The chain runs to 445 residues: Secretin receptor (445 aa).

A signal peptide spans 1–21; it reads MCPRPGPPLGLWLLLGFACAA. At 22-137 the chain is on the extracellular side; sequence HLVGAPPRLC…HERQHAYLLK (116 aa). Cystine bridges form between cysteine 44–cysteine 71, cysteine 62–cysteine 103, and cysteine 85–cysteine 119. Asparagine 68, asparagine 96, asparagine 102, and asparagine 124 each carry an N-linked (GlcNAc...) asparagine glycan. A helical transmembrane segment spans residues 138–163; it reads LKVMYTVGYSSSLVMLLVALGILCAF. Residues 164–170 are Cytoplasmic-facing; it reads RRLHCTR. A helical transmembrane segment spans residues 171–191; sequence NYIHMHLFLSFILRALSNFIK. Over 192-212 the chain is Extracellular; that stretch reads DAVLFSSDDAIHCDAHRVGCK. A disulfide bridge connects residues cysteine 211 and cysteine 281. The helical transmembrane segment at 213–235 threads the bilayer; the sequence is LVMVFFQYCIMANYAWLLVEGLY. The Cytoplasmic segment spans residues 236-250; that stretch reads LHSLLVVSFFSERKC. A helical transmembrane segment spans residues 251-272; the sequence is LQGFVVLGWGSPAMFVTSWAVT. Over 273–287 the chain is Extracellular; it reads RHFLEDSGCWDINAN. The helical transmembrane segment at 288-311 threads the bilayer; the sequence is AAIWWVIRGPVILSILINFILFIN. The Cytoplasmic segment spans residues 312-336; it reads ILRILTRKLRTQETRGQDMNHYKRL. A helical membrane pass occupies residues 337–352; sequence ARSTLLLIPLFGVHYI. At 353 to 363 the chain is on the extracellular side; the sequence is VFVFSPEGAME. A helical membrane pass occupies residues 364 to 387; sequence IQLFFELALGSFQGLVVAVLYCFL. Residues 388-445 are Cytoplasmic-facing; it reads NGEVQLEVQKKWQQWHLWEPPLCPVALSSSFSNGTSSLNSTKACPSGRSRDTCKVSII.

This sequence belongs to the G-protein coupled receptor 2 family. Phosphorylated on Ser and Thr residues at the cytoplasmic C-terminus by G protein-coupled receptor kinases (GRKs).

The protein resides in the cell membrane. The protein localises to the basolateral cell membrane. Functionally, g protein-coupled receptor activated by secretin (SCT), which is involved in different processes such as regulation of the pH of the duodenal content, food intake and water homeostasis. Ligand binding causes a conformation change that triggers signaling via guanine nucleotide-binding proteins (G proteins) and activates cAMP-dependent pathway. Upon binding to secretin, regulates the pH of the duodenum by (1) inhibiting the secretion of gastric acid from the parietal cells of the stomach and (2) stimulating the production of bicarbonate (NaHCO(3)) from the ductal cells of the pancreas. In addition to regulating the pH of the duodenal content, plays a central role in diet induced thermogenesis: acts as a non-sympathetic brown fat (BAT) activator mediating prandial thermogenesis, which consequentially induces satiation. Mechanistically, secretin released by the gut after a meal binds to secretin receptor (SCTR) in brown adipocytes, activating brown fat thermogenesis by stimulating lipolysis, which is sensed in the brain and promotes satiation. Also able to stimulate lipolysis in white adipocytes. Also plays an important role in cellular osmoregulation by regulating renal water reabsorption. Also plays a role in the central nervous system: required for synaptic plasticity. This chain is Secretin receptor (SCTR), found in Oryctolagus cuniculus (Rabbit).